Reading from the N-terminus, the 85-residue chain is Beta-toxin BmKAs1 (85 aa).

The signal sequence occupies residues Met1–Ala19. Positions Asp20 to Asn82 constitute an LCN-type CS-alpha/beta domain. Intrachain disulfides connect Cys31–Cys81, Cys35–Cys56, Cys42–Cys63, and Cys46–Cys65.

It belongs to the long (4 C-C) scorpion toxin superfamily. Sodium channel inhibitor family. In terms of processing, a possible sulfoxide Met-85 on BmP09 could explain the difference of function between BmK AS-1 and BmP09. As to expression, expressed by the venom gland.

The protein resides in the secreted. Beta toxins bind voltage-independently at site-4 of sodium channels (Nav) and shift the voltage of activation toward more negative potentials thereby affecting sodium channel activation and promoting spontaneous and repetitive firing. BmKAs1 also significantly stimulates the binding of [3H]-ryanodine to ryanodine receptors on the sarcoplasmic reticulum of the skeletal muscle. It also displays antinociceptive effect in rat models. Functionally, toxin BmP09 (which may be post-translationally modified) specifically and reversibly blocks large conductance calcium-dependent and voltage-dependent potassium channels (BK) but has no effect on sodium channels. This chain is Beta-toxin BmKAs1, found in Olivierus martensii (Manchurian scorpion).